Consider the following 159-residue polypeptide: Eukaryotic translation initiation factor 5A-2 (159 aa).

Residues 1 to 12 (MSDEEHQFESKA) are compositionally biased toward basic and acidic residues. The tract at residues 1–23 (MSDEEHQFESKADAGASKTYPQQ) is disordered. Lys52 is subject to Hypusine.

It belongs to the eIF-5A family. Lys-52 undergoes hypusination, a unique post-translational modification that consists in the addition of a butylamino group from spermidine to lysine side chain, leading to the formation of the unusual amino acid hypusine. eIF-5As are the only known proteins to undergo this modification, which is essential for their function.

Translation factor that promotes translation elongation and termination, particularly upon ribosome stalling at specific amino acid sequence contexts. Binds between the exit (E) and peptidyl (P) site of the ribosome and promotes rescue of stalled ribosome: specifically required for efficient translation of polyproline-containing peptides as well as other motifs that stall the ribosome. Acts as a ribosome quality control (RQC) cofactor by joining the RQC complex to facilitate peptidyl transfer during CAT tailing step. The protein is Eukaryotic translation initiation factor 5A-2 (EIF-5A2) of Nicotiana plumbaginifolia (Leadwort-leaved tobacco).